The primary structure comprises 283 residues: NAD kinase (283 aa).

The Proton acceptor role is filled by D66. NAD(+)-binding positions include 66–67 (DG), 140–141 (ND), R151, R168, D170, and Q240.

Belongs to the NAD kinase family. Requires a divalent metal cation as cofactor.

The protein localises to the cytoplasm. The enzyme catalyses NAD(+) + ATP = ADP + NADP(+) + H(+). Involved in the regulation of the intracellular balance of NAD and NADP, and is a key enzyme in the biosynthesis of NADP. Catalyzes specifically the phosphorylation on 2'-hydroxyl of the adenosine moiety of NAD to yield NADP. The chain is NAD kinase from Syntrophobacter fumaroxidans (strain DSM 10017 / MPOB).